The following is a 444-amino-acid chain: CCA-adding enzyme (444 aa).

Residues Ser-57 and Arg-60 each contribute to the ATP site. Positions 57 and 60 each coordinate CTP. Positions 69, 71, and 124 each coordinate Mg(2+). The ATP site is built by His-147, Lys-168, and Tyr-177. Positions 147, 168, and 177 each coordinate CTP.

It belongs to the tRNA nucleotidyltransferase/poly(A) polymerase family. Archaeal CCA-adding enzyme subfamily. In terms of assembly, homodimer. It depends on Mg(2+) as a cofactor.

The catalysed reaction is a tRNA precursor + 2 CTP + ATP = a tRNA with a 3' CCA end + 3 diphosphate. The enzyme catalyses a tRNA with a 3' CCA end + 2 CTP + ATP = a tRNA with a 3' CCACCA end + 3 diphosphate. Its function is as follows. Catalyzes the addition and repair of the essential 3'-terminal CCA sequence in tRNAs without using a nucleic acid template. Adds these three nucleotides in the order of C, C, and A to the tRNA nucleotide-73, using CTP and ATP as substrates and producing inorganic pyrophosphate. tRNA 3'-terminal CCA addition is required both for tRNA processing and repair. Also involved in tRNA surveillance by mediating tandem CCA addition to generate a CCACCA at the 3' terminus of unstable tRNAs. While stable tRNAs receive only 3'-terminal CCA, unstable tRNAs are marked with CCACCA and rapidly degraded. The chain is CCA-adding enzyme from Methanococcus maripaludis (strain C5 / ATCC BAA-1333).